The sequence spans 790 residues: Vacuolar protein sorting-associated protein 35B (790 aa).

The protein belongs to the VPS35 family. As to quaternary structure, component of the retromer complex which consists of VPS29 (MAG1), VPS26 (VPS26A or VPS26B), VPS35 (VPS35A or VPS35B or VPS35C), VPS5/17 (SNX1 or SNX2A or SNX2B). Component of a retromer subcomplex consisting of VPS29 (MAG1), VPS26 (VPS26A or VPS26B), VPS35 (VPS35A or VPS35B or VPS35C). As to expression, expressed in siliques and maturing seeds (at protein level).

It localises to the cytoplasm. The protein localises to the endosome membrane. Its subcellular location is the prevacuolar compartment membrane. The protein resides in the golgi apparatus. It is found in the trans-Golgi network membrane. Its function is as follows. Plays a role in vesicular protein sorting. Component of the membrane-associated retromer complex which is essential in endosome-to-Golgi retrograde transport. Also involved in the efficient sorting of seed storage proteins globulin 12S and albumin 2S. The VPS29-VPS26-VPS35 subcomplex may be involved in recycling of specific cargos from endosome to the plasma membrane. In Arabidopsis thaliana (Mouse-ear cress), this protein is Vacuolar protein sorting-associated protein 35B (VPS35B).